The primary structure comprises 525 residues: DNA damage-binding protein CMR1 (525 aa).

Disordered regions lie at residues 38–86 and 212–233; these read AGIF…AESE and GILDASQQPDQNESDEEDEYPD. Basic residues predominate over residues 53 to 62; sequence TKKKPAPKRV. 7 WD repeats span residues 183 to 224, 241 to 281, 288 to 328, 339 to 379, 384 to 425, 448 to 491, and 494 to 525; these read ITRE…DQNE, PHTN…ATEA, SDDE…KANP, LSEK…TKHP, EHES…KDWK, GKWV…LAQL, and DVITAVPAVAVFHRTQNWVVGGTGSAKVCLWM. The segment covering 223 to 232 has biased composition (acidic residues); sequence NESDEEDEYP.

This sequence belongs to the WD repeat DDB2/WDR76 family.

Its function is as follows. DNA-binding protein that binds to both single- and double-stranded DNA. Binds preferentially to UV-damaged DNA. May be involved in DNA-metabolic processes. The polypeptide is DNA damage-binding protein CMR1 (Coccidioides immitis (strain RS) (Valley fever fungus)).